Here is a 344-residue protein sequence, read N- to C-terminus: DNA-directed RNA polymerase subunit alpha (344 aa).

An alpha N-terminal domain (alpha-NTD) region spans residues 1–246; it reads MPVEKFLKDF…EFLFPLIDFE (246 aa). Positions 259–344 are alpha C-terminal domain (alpha-CTD); it reads ESSNLLDMSI…VLSKNVKISE (86 aa).

The protein belongs to the RNA polymerase alpha chain family. In terms of assembly, homodimer. The RNAP catalytic core consists of 2 alpha, 1 beta, 1 beta' and 1 omega subunit. When a sigma factor is associated with the core the holoenzyme is formed, which can initiate transcription.

The enzyme catalyses RNA(n) + a ribonucleoside 5'-triphosphate = RNA(n+1) + diphosphate. Functionally, DNA-dependent RNA polymerase catalyzes the transcription of DNA into RNA using the four ribonucleoside triphosphates as substrates. The sequence is that of DNA-directed RNA polymerase subunit alpha from Borrelia garinii subsp. bavariensis (strain ATCC BAA-2496 / DSM 23469 / PBi) (Borreliella bavariensis).